Reading from the N-terminus, the 211-residue chain is Transcriptional regulatory protein RcsA (211 aa).

Residues 135-200 (SEVHPFTLSQ…VIYHVVRLTD (66 aa)) enclose the HTH luxR-type domain. Positions 159-178 (TIQISDKMQIKAKTVSSHKG) form a DNA-binding region, H-T-H motif.

The protein belongs to the RcsA family.

Its function is as follows. Component of the Rcs signaling system, which controls transcription of numerous genes. Binds to DNA to regulate expression of genes. This is Transcriptional regulatory protein RcsA from Erwinia amylovora (Fire blight bacteria).